The sequence spans 81 residues: Xenopsin peptides (81 aa).

A signal peptide spans 1–20; it reads MYKGIFLCVLLAVICANSLA. A propeptide spanning residues 21–37 is cleaved from the precursor; it reads TPSSDADEDNDEVERYV. A propeptide spans 65–73 (removed in mature form by a dipeptidylpeptidase); the sequence is EAMLRSAEA.

This sequence belongs to the gastrin/cholecystokinin family. Magainin subfamily. As to expression, XPF is synthesized in the stomach and stored in a novel granular multinucleated cell in the gastric mucosa, it is stored as active, processed peptides in large granules within the granular gland secretions of the skin.

The protein resides in the secreted. Functionally, xenopsin is a neurotensin-like octapeptide. Its function is as follows. XPF has antimicrobial activity. In Xenopus laevis (African clawed frog), this protein is Xenopsin peptides.